Consider the following 229-residue polypeptide: Small ribosomal subunit protein uS5 (229 aa).

An S5 DRBM domain is found at 61–124; the sequence is LEEQVLDVKL…AHAKLSLIKV (64 aa).

The protein belongs to the universal ribosomal protein uS5 family. In terms of assembly, part of the 30S ribosomal subunit. Contacts protein S4.

In terms of biological role, with S4 and S12 plays an important role in translational accuracy. The polypeptide is Small ribosomal subunit protein uS5 (Methanococcus maripaludis (strain C6 / ATCC BAA-1332)).